A 423-amino-acid chain; its full sequence is Serine hydroxymethyltransferase (423 aa).

(6S)-5,6,7,8-tetrahydrofolate-binding positions include Leu-120 and 124–126 (GHL). Lys-229 carries the N6-(pyridoxal phosphate)lysine modification. Position 353 to 355 (353 to 355 (SPF)) interacts with (6S)-5,6,7,8-tetrahydrofolate.

It belongs to the SHMT family. In terms of assembly, homodimer. Pyridoxal 5'-phosphate serves as cofactor.

Its subcellular location is the cytoplasm. It carries out the reaction (6R)-5,10-methylene-5,6,7,8-tetrahydrofolate + glycine + H2O = (6S)-5,6,7,8-tetrahydrofolate + L-serine. It participates in one-carbon metabolism; tetrahydrofolate interconversion. It functions in the pathway amino-acid biosynthesis; glycine biosynthesis; glycine from L-serine: step 1/1. Functionally, catalyzes the reversible interconversion of serine and glycine with tetrahydrofolate (THF) serving as the one-carbon carrier. This reaction serves as the major source of one-carbon groups required for the biosynthesis of purines, thymidylate, methionine, and other important biomolecules. Also exhibits THF-independent aldolase activity toward beta-hydroxyamino acids, producing glycine and aldehydes, via a retro-aldol mechanism. This is Serine hydroxymethyltransferase from Prochlorococcus marinus (strain MIT 9301).